Consider the following 421-residue polypeptide: Testin (421 aa).

In terms of domain architecture, PET spans 92-199 (MILTNPVAAK…GDVKLPCEMD (108 aa)). Positions 133 to 164 (EKQPVAGSEGAQYRKKQLAKQLPAHDQDPSKC) are disordered. Residues 155-164 (PAHDQDPSKC) show a composition bias toward basic and acidic residues. LIM zinc-binding domains follow at residues 234 to 297 (YFCY…CDSE), 299 to 359 (PRCA…NHAV), and 362 to 421 (QGCH…KMMS).

Belongs to the prickle / espinas / testin family. As to quaternary structure, interacts via LIM domain 1 with ZYX. Interacts (via LIM domain 3) with ENAH and VASP. Interacts with ALKBH4, talin, actin, alpha-actinin, GRIP1 and PXN. Interacts (via LIM domain 2) with ACTL7A (via N-terminus). Heterodimer with ACTL7A; the heterodimer interacts with ENAH to form a heterotrimer.

It localises to the cytoplasm. The protein localises to the cell junction. Its subcellular location is the focal adhesion. Functionally, scaffold protein that may play a role in cell adhesion, cell spreading and in the reorganization of the actin cytoskeleton. Plays a role in the regulation of cell proliferation. May act as a tumor suppressor. The polypeptide is Testin (TES) (Plecturocebus moloch (Dusky titi monkey)).